A 192-amino-acid chain; its full sequence is 3-isopropylmalate dehydratase small subunit (192 aa).

It belongs to the LeuD family. LeuD type 1 subfamily. As to quaternary structure, heterodimer of LeuC and LeuD.

The catalysed reaction is (2R,3S)-3-isopropylmalate = (2S)-2-isopropylmalate. Its pathway is amino-acid biosynthesis; L-leucine biosynthesis; L-leucine from 3-methyl-2-oxobutanoate: step 2/4. Its function is as follows. Catalyzes the isomerization between 2-isopropylmalate and 3-isopropylmalate, via the formation of 2-isopropylmaleate. This is 3-isopropylmalate dehydratase small subunit from Oceanobacillus iheyensis (strain DSM 14371 / CIP 107618 / JCM 11309 / KCTC 3954 / HTE831).